Reading from the N-terminus, the 205-residue chain is Holliday junction branch migration complex subunit RuvA (205 aa).

Residues 1 to 64 (MIGKLTGLVD…EDAIRLFGFP (64 aa)) form a domain I region. The interval 65-143 (SEVERDWFRL…ALGPVDSLTA (79 aa)) is domain II. Residues 144-153 (KLTIAEAEGT) are flexible linker. The domain III stretch occupies residues 153–205 (TAPVAAQDAITALVNLGYGRPQAAAAVATSLEALGETAPLADLIRRGLKELAR).

Belongs to the RuvA family. Homotetramer. Forms an RuvA(8)-RuvB(12)-Holliday junction (HJ) complex. HJ DNA is sandwiched between 2 RuvA tetramers; dsDNA enters through RuvA and exits via RuvB. An RuvB hexamer assembles on each DNA strand where it exits the tetramer. Each RuvB hexamer is contacted by two RuvA subunits (via domain III) on 2 adjacent RuvB subunits; this complex drives branch migration. In the full resolvosome a probable DNA-RuvA(4)-RuvB(12)-RuvC(2) complex forms which resolves the HJ.

The protein localises to the cytoplasm. In terms of biological role, the RuvA-RuvB-RuvC complex processes Holliday junction (HJ) DNA during genetic recombination and DNA repair, while the RuvA-RuvB complex plays an important role in the rescue of blocked DNA replication forks via replication fork reversal (RFR). RuvA specifically binds to HJ cruciform DNA, conferring on it an open structure. The RuvB hexamer acts as an ATP-dependent pump, pulling dsDNA into and through the RuvAB complex. HJ branch migration allows RuvC to scan DNA until it finds its consensus sequence, where it cleaves and resolves the cruciform DNA. The protein is Holliday junction branch migration complex subunit RuvA of Beijerinckia indica subsp. indica (strain ATCC 9039 / DSM 1715 / NCIMB 8712).